Here is a 401-residue protein sequence, read N- to C-terminus: Bone morphogenetic protein 4 (401 aa).

The N-terminal stretch at methionine 1–glycine 19 is a signal peptide. Positions glycine 20–arginine 287 are excised as a propeptide. Asparagine 141, asparagine 204, and asparagine 238 each carry an N-linked (GlcNAc...) asparagine glycan. The segment at histidine 279 to lysine 299 is disordered. The span at alanine 280 to lysine 299 shows a compositional bias: basic residues. 3 cysteine pairs are disulfide-bonded: cysteine 301-cysteine 366, cysteine 330-cysteine 398, and cysteine 334-cysteine 400. 2 N-linked (GlcNAc...) asparagine glycosylation sites follow: asparagine 343 and asparagine 358.

It belongs to the TGF-beta family. Homodimer; disulfide-linked. Forms heterodimers with the TGF-beta family member derriere. Part of a complex consisting of twsg1 and chrd. Interacts with tsku.

The protein localises to the secreted. The protein resides in the extracellular space. Its subcellular location is the extracellular matrix. Posterior-ventralizing factor in Xenopus mesoderm induction. Induces posteroventral mesoderm and counteracts dorsalizing signals such as activin. This chain is Bone morphogenetic protein 4 (bmp4), found in Xenopus laevis (African clawed frog).